Reading from the N-terminus, the 536-residue chain is Cytochrome P450 monooxygenase phqM (536 aa).

Cys464 lines the heme pocket.

The protein belongs to the cytochrome P450 family. Heme serves as cofactor.

The protein operates within alkaloid biosynthesis. Its function is as follows. Cytochrome P450 monooxygenase; part of the gene cluster that mediates the biosynthesis of paraherquamide, a fungal indole alkaloid that belongs to a family of natural products containing a characteristic bicyclo[2.2.2]diazaoctane core. The first steps in the biosynthesis of paraherquamide is the production of the beta-methyl-proline precursor from L-isoleucine. They require oxidation of a terminally hydroxylated L-isoleucine to the corresponding aldehyde by enzymes which have still to be identified. Spontaneous cyclization and dehydration would yield the 4-methyl pyrolline-5-carboxylic acid, which is then reduced by the pyrroline-5-carboxylate reductase phqD leading to the beta-methyl-proline precursor. The next step of paraherquamide biosynthesis involves coupling of beta-methyl-proline and L-tryptophan by the bimodular NRPS phqB, to produce a monooxopiperazine intermediate. The reductase (R) domain of phqB utilizes NADPH for hydride transfer to reduce the thioester bond of the T domain-tethered linear dipeptide to a hemithioaminal intermediate, which spontaneously cleaves the C-S bond to release the aldehyde product. This compound undergoes spontaneous cyclization and dehydration to give a dienamine which is reverse prenylated at C-2 by the reverse prenyltransferase phqJ. The other prenyltransferase present in the cluster, phqI may be a redundant gene in the pathway. During biosynthetic assembly, the key step to produce the polycyclic core is catalyzed by the bifunctional reductase and intramolecular [4+2] Diels-Alderase, phqE, resulting in formation of the [2.2.2] diazaoctane intermediate preparaherquamide. Following formation of preparaherquamide, an indole 2,3-epoxidation-initiated pinacol-like rearrangement is catalyzed by the phqK FAD-dependent monooxygenase. The prenyltransferase phqA, the cytochrome P450 monooxygenase phqL, and the FAD-linked oxidoreductase phqH (or the cytochrome P450 monooxygenase phqM), are proposed to be involved in the formation of the pyran ring. The FAD-dependent monooxygenase phqK is likely responsible for generation of the spiro-oxindole, and the N-methylation is likely mediated by the phqN methyltransferase leading to the isolable natural product paraherquamide F. However, the order of these biosynthetic steps has still to be determined. In late-stage paraherquamide biosynthesis, the third P450 monooxygenase, phqO, is probably responsible for the C-14 hydroxylation, transforming paraherquamide F to paraherquamide G, and paraherquamide E to the final product paraherquamide A. The expansion from the 6-membered ring pyran (in paraherquamides F and G) to the 7-membered dioxepin ring (in paraherquamides A and E) represents a poorly understood but intriguing process that probably involves the 2-oxoglutarate-dependent dioxygenase phqC. Finally, the remaining members of the paraherquamide cluster, including phqI as well as phqM (or phqH), do not have a clearly prescribed role and appear to be redundant. The sequence is that of Cytochrome P450 monooxygenase phqM from Penicillium fellutanum.